The following is a 184-amino-acid chain: Isopentenyl-diphosphate Delta-isomerase (184 aa).

Mn(2+) contacts are provided by histidine 25 and histidine 32. Residues 30-164 (PLHLAFSCWL…PWAFSPWMVL (135 aa)) enclose the Nudix hydrolase domain. Residue cysteine 67 is part of the active site. Histidine 69 is a Mn(2+) binding site. A Mg(2+)-binding site is contributed by glutamate 87. Positions 114 and 116 each coordinate Mn(2+). Glutamate 116 is an active-site residue.

The protein belongs to the IPP isomerase type 1 family. In terms of assembly, homodimer. The cofactor is Mg(2+). It depends on Mn(2+) as a cofactor.

It is found in the cytoplasm. The catalysed reaction is isopentenyl diphosphate = dimethylallyl diphosphate. It functions in the pathway isoprenoid biosynthesis; dimethylallyl diphosphate biosynthesis; dimethylallyl diphosphate from isopentenyl diphosphate: step 1/1. Its function is as follows. Catalyzes the 1,3-allylic rearrangement of the homoallylic substrate isopentenyl (IPP) to its highly electrophilic allylic isomer, dimethylallyl diphosphate (DMAPP). In Klebsiella pneumoniae (strain 342), this protein is Isopentenyl-diphosphate Delta-isomerase.